A 43-amino-acid chain; its full sequence is Peroxidase (43 aa).

It belongs to the peroxidase family. Classical plant (class III) peroxidase subfamily. Ca(2+) is required as a cofactor. It depends on heme b as a cofactor.

The catalysed reaction is 2 a phenolic donor + H2O2 = 2 a phenolic radical donor + 2 H2O. Functionally, removal of H(2)O(2), oxidation of toxic reductants, biosynthesis and degradation of lignin, suberization, auxin catabolism, response to environmental stresses such as wounding, pathogen attack and oxidative stress. These functions might be dependent on each isozyme/isoform in each plant tissue. This Cynara cardunculus var. scolymus (Globe artichoke) protein is Peroxidase.